We begin with the raw amino-acid sequence, 394 residues long: Sorting nexin-3 (394 aa).

2 disordered regions span residues 1 to 82 (MAFY…FGGA) and 116 to 226 (LGGA…SATA). Low complexity-rich tracts occupy residues 31–82 (AAPG…FGGA) and 131–178 (AHSS…AFPS). The span at 179 to 207 (GVSTSQYQPTSQGAQGASRFQSHTPSTLL) shows a compositional bias: polar residues. One can recognise a PX domain in the interval 272 to 389 (NFLEVEVRSP…AAFLQDSGWS (118 aa)). A 1,2-diacyl-sn-glycero-3-phospho-(1D-myo-inositol-3-phosphate)-binding residues include R315, S317, K341, R346, and R355.

The protein belongs to the sorting nexin family.

It localises to the cytoplasm. The protein localises to the golgi apparatus membrane. Its subcellular location is the prevacuolar compartment membrane. In terms of biological role, required for retention of late Golgi membrane proteins. Component of the retrieval machinery that functions by direct interaction with the cytosolic tails of certain TGN membrane proteins during the sorting/budding process at the prevacuolar compartment. Binds phosphatidylinositol 3-phosphate (PtdIns(P3)). The sequence is that of Sorting nexin-3 (SNX3) from Mycosarcoma maydis (Corn smut fungus).